We begin with the raw amino-acid sequence, 579 residues long: Glutamate--tRNA ligase (579 aa).

Residues Pro114–His124 carry the 'HIGH' region motif.

Belongs to the class-I aminoacyl-tRNA synthetase family. Glutamate--tRNA ligase type 2 subfamily.

It localises to the cytoplasm. It carries out the reaction tRNA(Glu) + L-glutamate + ATP = L-glutamyl-tRNA(Glu) + AMP + diphosphate. In terms of biological role, catalyzes the attachment of glutamate to tRNA(Glu) in a two-step reaction: glutamate is first activated by ATP to form Glu-AMP and then transferred to the acceptor end of tRNA(Glu). The sequence is that of Glutamate--tRNA ligase from Haloarcula marismortui (strain ATCC 43049 / DSM 3752 / JCM 8966 / VKM B-1809) (Halobacterium marismortui).